We begin with the raw amino-acid sequence, 634 residues long: Ras and EF-hand domain-containing protein homolog (634 aa).

EF-hand domains are found at residues 5-33 and 33-68; these read EVEN…CPQL and LDDN…TVQH. Aspartate 46, aspartate 48, serine 50, lysine 52, and glutamate 57 together coordinate Ca(2+). A coiled-coil region spans residues 169–310; it reads LSEKKHENER…RCEFDQKQDE (142 aa). The interval 212–234 is disordered; that stretch reads ARQEERDRLTKEKEEMRQRMSDE. GTP-binding positions include 449–454, 552–555, and 585–586; these read AVGKSS, NKVD, and AL. The propeptide at 632–634 is removed in mature form; that stretch reads RGS.

This sequence belongs to the small GTPase superfamily. Rab family. As to quaternary structure, homodimer.

The protein localises to the cytoplasm. The protein resides in the perinuclear region. Binds GTP and GDP. Plays a role in uterine seam cell development. This Caenorhabditis elegans protein is Ras and EF-hand domain-containing protein homolog.